The primary structure comprises 2103 residues: uncharacterized protein (2103 aa).

The segment covering 1–12 (MSVPGTPGAMEP) has biased composition (low complexity). Residues 1–61 (MSVPGTPGAM…DADDQEEEME (61 aa)) are disordered. The segment covering 51-61 (EDADDQEEEME) has biased composition (acidic residues). A Bromo domain is found at 77-196 (YELQQGYRIL…MMLEQKLALL (120 aa)). 5 disordered regions span residues 730 to 750 (AKHK…ITKK), 853 to 881 (NREL…SIDS), 933 to 956 (QSKQ…AKLS), 1224 to 1244 (SASP…TLNG), and 1770 to 1817 (GATR…STSP). Basic and acidic residues predominate over residues 865 to 877 (DLGKDSPKGEISK). Over residues 1224–1234 (SASPTISSTGQ) the composition is skewed to polar residues. Positions 1235–1244 (PLSSTTTLNG) are enriched in low complexity. Positions 1773–1794 (RSVSISKRQSRTSLQFHSPGIS) are enriched in polar residues. Over residues 1795-1808 (TTVPTNVNTNKPQT) the composition is skewed to low complexity.

Its subcellular location is the nucleus. This is an uncharacterized protein from Homo sapiens (Human).